Reading from the N-terminus, the 304-residue chain is ATP synthase gamma chain (304 aa).

It belongs to the ATPase gamma chain family. In terms of assembly, F-type ATPases have 2 components, CF(1) - the catalytic core - and CF(0) - the membrane proton channel. CF(1) has five subunits: alpha(3), beta(3), gamma(1), delta(1), epsilon(1). CF(0) has three main subunits: a, b and c.

The protein localises to the cell membrane. Functionally, produces ATP from ADP in the presence of a proton gradient across the membrane. The gamma chain is believed to be important in regulating ATPase activity and the flow of protons through the CF(0) complex. In Mycolicibacterium paratuberculosis (strain ATCC BAA-968 / K-10) (Mycobacterium paratuberculosis), this protein is ATP synthase gamma chain.